Here is a 607-residue protein sequence, read N- to C-terminus: Methylmalonate-semialdehyde dehydrogenase [acylating], mitochondrial (607 aa).

Residues 1–69 form a disordered region; sequence MVRVKQKNLE…KLRSSSSTTT (69 aa). Residues 1 to 98 constitute a mitochondrion transit peptide; it reads MVRVKQKNLE…QFLALRSSWL (98 aa). The span at 9-30 shows a compositional bias: polar residues; that stretch reads LESYRSNGTYPPTWRNPTTSFA. Positions 42-51 are enriched in basic residues; the sequence is LKSKTKRRRL. NAD(+)-binding residues include Phe259, Lys283, Glu286, Lys287, and Ser336. The Nucleophile role is filled by Cys391. Glu491 contacts NAD(+).

It belongs to the aldehyde dehydrogenase family.

It is found in the mitochondrion. The enzyme catalyses 2-methyl-3-oxopropanoate + NAD(+) + CoA + H2O = propanoyl-CoA + hydrogencarbonate + NADH + H(+). This chain is Methylmalonate-semialdehyde dehydrogenase [acylating], mitochondrial (ALDH6B2), found in Arabidopsis thaliana (Mouse-ear cress).